The primary structure comprises 603 residues: Elongation factor 4 (603 aa).

One can recognise a tr-type G domain in the interval 2–184 (NHIRNFSIIA…AVIARVPPPK (183 aa)). GTP-binding positions include 14-19 (DHGKST) and 131-134 (NKMD).

The protein belongs to the TRAFAC class translation factor GTPase superfamily. Classic translation factor GTPase family. LepA subfamily.

The protein resides in the cell inner membrane. The catalysed reaction is GTP + H2O = GDP + phosphate + H(+). Required for accurate and efficient protein synthesis under certain stress conditions. May act as a fidelity factor of the translation reaction, by catalyzing a one-codon backward translocation of tRNAs on improperly translocated ribosomes. Back-translocation proceeds from a post-translocation (POST) complex to a pre-translocation (PRE) complex, thus giving elongation factor G a second chance to translocate the tRNAs correctly. Binds to ribosomes in a GTP-dependent manner. The protein is Elongation factor 4 of Polaromonas sp. (strain JS666 / ATCC BAA-500).